The sequence spans 488 residues: MEPQIVKFVFKEEMTCQCPKMSDSACDVDTDQNYFEEEVRLASFANFSSSYPVSAPALARAGFYYTGDGDRVKCFSCMAMVEDWQHGDTAIGKHRKISPNCKFINGFNNFRSDCIQTQAPVMQNSHANGFPNSAEDPGEKSSSEIMADYMLRTGRVVDMSKPKYPRHMAMCSEEARLQTFQNWPGYSPLMPKELANAGLFYTGINDQVKCFCCGGKLMNWEPSDRAWTEHKKHFPECYFVLGRDVGNVTRDASVQGSTYMNSYNARLETFSSWPFPIDKETLAKAGFYRIGDEDATKCFSCGGMLNCWAANDDPWEEHAKAYPGCQFLIEEKGQQFINNAQLQRPILHKANSGEASPALPKDTSFLKNPLVIYAQQMGFPLEEIKKVMGQKLKTTGNNYTCVEEFVSDLLCAQSETIADKPMKREISIEEKLRQLEEEKVCKVCMDRRITIVFIPCGHLVACAVCADVLDKCPICCTIIERRQKIFMS.

BIR repeat units lie at residues 40–105, 176–241, and 266–329; these read RLAS…KFIN, RLQT…YFVL, and RLET…QFLI. Zn(2+)-binding residues include cysteine 298, cysteine 301, histidine 318, and cysteine 325. The RING-type zinc-finger motif lies at 441–476; sequence CKVCMDRRITIVFIPCGHLVACAVCADVLDKCPICC.

The protein belongs to the IAP family. Monomer, and homodimer. In terms of processing, degraded in a 2-step mechanism; a caspase-independent first step and a caspase-dependent second step. Stabilized indirectly by MAPK, which acts to delay caspase activation, rather than directly phosphorylating xiap.

It localises to the cytoplasm. Its subcellular location is the nucleus. It catalyses the reaction S-ubiquitinyl-[E2 ubiquitin-conjugating enzyme]-L-cysteine + [acceptor protein]-L-lysine = [E2 ubiquitin-conjugating enzyme]-L-cysteine + N(6)-ubiquitinyl-[acceptor protein]-L-lysine.. Functionally, multi-functional protein which regulates not only caspases and apoptosis, but also acts as an E3 ubiquitin-protein ligase mediating ubiquitination and subsequent proteasomal degradation of its target proteins. Acts as a direct caspase inhibitor. E3 ubiquitin-protein ligase that acts as an important regulator of innate immunity by mediating 'Lys-63'-linked polyubiquitination of ripk2 downstream of NOD1 and NOD2, thereby transforming ripk2 into a scaffolding protein for downstream effectors, ultimately leading to activation of the NF-kappa-B and MAP kinases signaling. A key apoptotic suppressor in eggs. Acts as a positive regulator of Wnt signaling. The polypeptide is E3 ubiquitin-protein ligase XIAP (xiap) (Xenopus laevis (African clawed frog)).